A 491-amino-acid polypeptide reads, in one-letter code: 3-octaprenyl-4-hydroxybenzoate carboxy-lyase (491 aa).

Asn172 serves as a coordination point for Mn(2+). Prenylated FMN contacts are provided by residues 175 to 177, 189 to 191, and 194 to 195; these read IYR, RWL, and RG. Glu238 contributes to the Mn(2+) binding site. Asp287 functions as the Proton donor in the catalytic mechanism.

Belongs to the UbiD family. As to quaternary structure, homohexamer. The cofactor is prenylated FMN. Mn(2+) serves as cofactor.

It is found in the cell membrane. The enzyme catalyses a 4-hydroxy-3-(all-trans-polyprenyl)benzoate + H(+) = a 2-(all-trans-polyprenyl)phenol + CO2. It participates in cofactor biosynthesis; ubiquinone biosynthesis. Its function is as follows. Catalyzes the decarboxylation of 3-octaprenyl-4-hydroxy benzoate to 2-octaprenylphenol, an intermediate step in ubiquinone biosynthesis. This Histophilus somni (strain 2336) (Haemophilus somnus) protein is 3-octaprenyl-4-hydroxybenzoate carboxy-lyase.